The chain runs to 360 residues: Peptide chain release factor 1 (360 aa).

Glutamine 237 carries the post-translational modification N5-methylglutamine.

This sequence belongs to the prokaryotic/mitochondrial release factor family. Methylated by PrmC. Methylation increases the termination efficiency of RF1.

It is found in the cytoplasm. Its function is as follows. Peptide chain release factor 1 directs the termination of translation in response to the peptide chain termination codons UAG and UAA. The protein is Peptide chain release factor 1 of Pseudomonas putida (strain ATCC 700007 / DSM 6899 / JCM 31910 / BCRC 17059 / LMG 24140 / F1).